Here is a 197-residue protein sequence, read N- to C-terminus: Imidazoleglycerol-phosphate dehydratase (197 aa).

Belongs to the imidazoleglycerol-phosphate dehydratase family.

Its subcellular location is the cytoplasm. The enzyme catalyses D-erythro-1-(imidazol-4-yl)glycerol 3-phosphate = 3-(imidazol-4-yl)-2-oxopropyl phosphate + H2O. The protein operates within amino-acid biosynthesis; L-histidine biosynthesis; L-histidine from 5-phospho-alpha-D-ribose 1-diphosphate: step 6/9. The chain is Imidazoleglycerol-phosphate dehydratase from Pseudomonas putida (strain W619).